We begin with the raw amino-acid sequence, 334 residues long: Ornithine carbamoyltransferase, catabolic (334 aa).

Carbamoyl phosphate is bound by residues 57-60 (STRT), Gln84, Arg108, and 135-138 (HPTQ). L-ornithine contacts are provided by residues Asn168, Asp232, and 236–237 (SM). Residues 274 to 275 (CL) and Arg321 each bind carbamoyl phosphate.

This sequence belongs to the aspartate/ornithine carbamoyltransferase superfamily. OTCase family.

Its subcellular location is the cytoplasm. It carries out the reaction carbamoyl phosphate + L-ornithine = L-citrulline + phosphate + H(+). The protein operates within amino-acid degradation; L-arginine degradation via ADI pathway; carbamoyl phosphate from L-arginine: step 2/2. In terms of biological role, reversibly catalyzes the transfer of the carbamoyl group from carbamoyl phosphate (CP) to the N(epsilon) atom of ornithine (ORN) to produce L-citrulline. The polypeptide is Ornithine carbamoyltransferase, catabolic (arcB) (Avibacterium paragallinarum (Haemophilus gallinarum)).